A 217-amino-acid chain; its full sequence is Small ribosomal subunit protein eS6 (217 aa).

Belongs to the eukaryotic ribosomal protein eS6 family.

The sequence is that of Small ribosomal subunit protein eS6 from Hyperthermus butylicus (strain DSM 5456 / JCM 9403 / PLM1-5).